Here is a 468-residue protein sequence, read N- to C-terminus: Arginine biosynthesis bifunctional protein ArgJ, mitochondrial (468 aa).

The transit peptide at 1-23 directs the protein to the mitochondrion; that stretch reads MVGFSRCALSQLRQPKAQLVRSF. The substrate site is built by Thr-198, Lys-227, Thr-238, Glu-324, Asn-463, and Thr-468. The active-site Nucleophile is Thr-238.

This sequence belongs to the ArgJ family. Heterodimer of an alpha and a beta chain. In terms of processing, the alpha and beta chains are autoproteolytically processed from a single precursor protein within the mitochondrion.

It is found in the mitochondrion matrix. The catalysed reaction is N(2)-acetyl-L-ornithine + L-glutamate = N-acetyl-L-glutamate + L-ornithine. The enzyme catalyses L-glutamate + acetyl-CoA = N-acetyl-L-glutamate + CoA + H(+). Its pathway is amino-acid biosynthesis; L-arginine biosynthesis; L-ornithine and N-acetyl-L-glutamate from L-glutamate and N(2)-acetyl-L-ornithine (cyclic): step 1/1. The protein operates within amino-acid biosynthesis; L-arginine biosynthesis; N(2)-acetyl-L-ornithine from L-glutamate: step 1/4. Functionally, catalyzes two activities which are involved in the cyclic version of arginine biosynthesis: the synthesis of acetylglutamate from glutamate and acetyl-CoA, and of ornithine by transacetylation between acetylornithine and glutamate. The sequence is that of Arginine biosynthesis bifunctional protein ArgJ, mitochondrial from Podospora anserina (strain S / ATCC MYA-4624 / DSM 980 / FGSC 10383) (Pleurage anserina).